The following is a 74-amino-acid chain: Conotoxin AbVIA (74 aa).

Residues 1–17 (VLIIAVLFLTACQLTTA) form the signal peptide. The propeptide occupies 18-38 (VTSSRGEQKHRALRSTDKKFK). 3 disulfides stabilise this stretch: cysteine 43-cysteine 57, cysteine 50-cysteine 61, and cysteine 56-cysteine 68. Serine 73 is subject to Serine amide.

The protein belongs to the conotoxin O1 superfamily. Expressed by the venom duct.

It is found in the secreted. This is Conotoxin AbVIA from Conus abbreviatus (Abbreviated cone).